The sequence spans 398 residues: Histidinol-phosphate aminotransferase (398 aa).

A compositionally biased stretch (polar residues) spans 1 to 10 (MTGQRATPQP). The tract at residues 1 to 30 (MTGQRATPQPTLDDLPLRDDLRGKSPYGAP) is disordered. Residue Lys-234 is modified to N6-(pyridoxal phosphate)lysine.

Belongs to the class-II pyridoxal-phosphate-dependent aminotransferase family. Histidinol-phosphate aminotransferase subfamily. As to quaternary structure, homodimer. Requires pyridoxal 5'-phosphate as cofactor.

The enzyme catalyses L-histidinol phosphate + 2-oxoglutarate = 3-(imidazol-4-yl)-2-oxopropyl phosphate + L-glutamate. It functions in the pathway amino-acid biosynthesis; L-histidine biosynthesis; L-histidine from 5-phospho-alpha-D-ribose 1-diphosphate: step 7/9. In Mycolicibacterium paratuberculosis (strain ATCC BAA-968 / K-10) (Mycobacterium paratuberculosis), this protein is Histidinol-phosphate aminotransferase.